Consider the following 102-residue polypeptide: Circadian clock oscillator protein KaiB (102 aa).

This sequence belongs to the KaiB family. Undergoes a major conformational rearrangment; in the free state forms homotetramers with 2 dimers. When bound to the CI domain of KaiC switches to a monomeric thioredoxin-fold (KaiB(fs)). Monomers, homodimers and homotetramers are detected in solution; at low concentrations only monomers are seen. In vitro forms KaiC(6):KaiB(1) and KaiC(6):KaiB(6) complexes. Only associates with 'Ser-431'-phosphorylated KaiC (and not with doubly phosphorylated KaiC). Complex formation between KaiB and KaiC is regulated by the phosphorylation state of KaiC and by an ATP hydrolysis-driven conformation change in the CI ring of KaiC; complex formation is slow. Slow complex formation is crucial for the timing of the circadian period. In low resolution cryo-EM forms a KaiC(6):KaiB(6) complex. The KaiABC complex composition changes during the circadian cycle to control KaiC phosphorylation. Complexes KaiC(6), KaiA(2-4):KaiC(6), KaiB(6):KaiC(6) and KaiC(6):KaiB(6):KaiA(12) are among the most important forms, many form cooperatively. The KaiB:KaiC complex is more prevalent at 16 hours (in the dark) than at 4 hours (in the light) in the circadian cycle. The KaiA:KaiB complex is only found at 20-24 hours in the circadian cycle (subjective night). Binds to the CI domain of KaiC; SasA and KaiB compete to bind to the CI domain.

It is found in the cytoplasm. The protein localises to the cell membrane. Key component of the KaiABC oscillator complex, which constitutes the main circadian regulator in cyanobacteria. Complex composition changes during the circadian cycle to control KaiC phosphorylation. KaiA stimulates KaiC autophosphorylation, while KaiB sequesters KaiA, leading to KaiC autodephosphorylation. KaiA binding to the KaiC CII domain yields KaiA(2-4):KaiC(6) complexes which stimulate KaiC autophosphorylation. Phospho-Ser-431 KaiC accumulation triggers binding of KaiB to form the KaiB(6):KaiC(6) complex, leading to changes in the output regulators CikA and SasA. KaiB switches to a thioredoxin-like fold (KaiB(fs)) in complex with KaiC. KaiB(6):KaiC(6) formation exposes a site for KaiA binding that sequesters KaiA from the CII domain, making the KaiC(6):KaiB(6):KaiA(12) complex that results in KaiC autodephosphorylation. Complete dephosphorylation of KaiC leads to dissociation of KaiA(2):KaiB(1), completing 1 cycle of the Kai oscillator. In terms of biological role, circadian oscillations can be generated in vitro by incubating KaiA, KaiB and KaiC with 1 mM ATP. The cycle is self-sustainable for at least 3 cycles and resistant to temperature changes. A very robust clock is reconstituted with KaiA, KaiB, KaiC, SasA, CikA and RpaA; output is measured by transcription from an appropriate reporter. Its function is as follows. A metamorphic protein which reversibly switches between an inactive tetrameric fold and a rare, thioredoxin-like monomeric fold (KaiB(fs)). KaiB(fs) binds phospho-KaiC, KaiA and CikA. KaiA and CikA compete for binding to KaiB(fs), and KaiB(fs) and SasA compete for binding to KaiC, thus the clock oscillator and output signal pathway are tightly coupled. The protein is Circadian clock oscillator protein KaiB of Synechococcus elongatus (strain ATCC 33912 / PCC 7942 / FACHB-805) (Anacystis nidulans R2).